The sequence spans 615 residues: Dihydroxy-acid dehydratase (615 aa).

A Mg(2+)-binding site is contributed by aspartate 83. Cysteine 124 is a [2Fe-2S] cluster binding site. Mg(2+)-binding residues include aspartate 125 and lysine 126. The residue at position 126 (lysine 126) is an N6-carboxylysine. Cysteine 199 lines the [2Fe-2S] cluster pocket. Glutamate 495 serves as a coordination point for Mg(2+). Serine 521 (proton acceptor) is an active-site residue.

The protein belongs to the IlvD/Edd family. Homodimer. [2Fe-2S] cluster is required as a cofactor. Requires Mg(2+) as cofactor.

The catalysed reaction is (2R)-2,3-dihydroxy-3-methylbutanoate = 3-methyl-2-oxobutanoate + H2O. The enzyme catalyses (2R,3R)-2,3-dihydroxy-3-methylpentanoate = (S)-3-methyl-2-oxopentanoate + H2O. Its pathway is amino-acid biosynthesis; L-isoleucine biosynthesis; L-isoleucine from 2-oxobutanoate: step 3/4. The protein operates within amino-acid biosynthesis; L-valine biosynthesis; L-valine from pyruvate: step 3/4. Its function is as follows. Functions in the biosynthesis of branched-chain amino acids. Catalyzes the dehydration of (2R,3R)-2,3-dihydroxy-3-methylpentanoate (2,3-dihydroxy-3-methylvalerate) into 2-oxo-3-methylpentanoate (2-oxo-3-methylvalerate) and of (2R)-2,3-dihydroxy-3-methylbutanoate (2,3-dihydroxyisovalerate) into 2-oxo-3-methylbutanoate (2-oxoisovalerate), the penultimate precursor to L-isoleucine and L-valine, respectively. The polypeptide is Dihydroxy-acid dehydratase (Corynebacterium jeikeium (strain K411)).